Consider the following 1205-residue polypeptide: Caskin-2 (1205 aa).

6 ANK repeats span residues 48 to 77 (DGFS…SVDI), 81 to 110 (NGMR…SVNA), 114 to 143 (DGQI…NPCH), 147 to 176 (GKKT…CVSL), 188 to 217 (NFTT…EINK), and 220 to 249 (KMGT…DVNI). The SH3 domain occupies 281-347 (SGILKVRALK…PPSIVEVISK (67 aa)). 2 stretches are compositionally biased toward polar residues: residues 377-388 (SPGSQLGINPDT) and 398-411 (GSES…SGQS). The segment at 377 to 411 (SPGSQLGINPDTSVAGDRHSVGSESSVRSAGSGQS) is disordered. SAM domains follow at residues 468–531 (KDAE…LIVA) and 537–601 (QIPV…LLDL). Residues 666-687 (RRSFSQESISSRSQGSGHSQES) are compositionally biased toward low complexity. Disordered regions lie at residues 666–689 (RRSF…ESAS), 784–964 (RPGR…QRHL), 984–1054 (QIAA…SQEP), and 1132–1155 (SEAS…KGPP). A compositionally biased stretch (polar residues) spans 823 to 840 (SSMSSAEGQSPEGQSSVK). Residues 908–919 (ISSQHSSSESIP) are compositionally biased toward low complexity. Residues 942 to 959 (DATSELSPTQESQLQSAE) are compositionally biased toward polar residues. A compositionally biased stretch (basic and acidic residues) spans 1009-1037 (KNEEHDFNLTESDTVKRRPKVKEKEEESP). Composition is skewed to polar residues over residues 1042–1054 (ANNS…SQEP) and 1137–1155 (REQT…KGPP).

In Xenopus laevis (African clawed frog), this protein is Caskin-2 (caskin2).